The primary structure comprises 98 residues: Cystatin-B (98 aa).

N-acetylmethionine is present on Met-1. Residues Gln-46–Gly-50 carry the Secondary area of contact motif.

This sequence belongs to the cystatin family. As to quaternary structure, able to form dimers stabilized by noncovalent forces.

The protein localises to the cytoplasm. It is found in the nucleus. Functionally, this is an intracellular thiol proteinase inhibitor. Tightly binding reversible inhibitor of cathepsins L, H and B. This chain is Cystatin-B (CSTB), found in Pan troglodytes (Chimpanzee).